Reading from the N-terminus, the 378-residue chain is Signal peptide peptidase (378 aa).

The disordered stretch occupies residues 1 to 27 (MDSAVSDPHNGSAEAGTPANGTTRPPS). The Lumenal segment spans residues 1–31 (MDSAVSDPHNGSAEAGTPANGTTRPPSTPEG). N-linked (GlcNAc...) asparagine glycans are attached at residues asparagine 10 and asparagine 20. The helical transmembrane segment at 32 to 52 (IALAYGSLLLMALLPIFFGAL) threads the bilayer. The Cytoplasmic portion of the chain corresponds to 53–77 (RSVRCARGKSSSDMPETITSRDAAR). The helical transmembrane segment at 78-98 (FPIIASCTLLGLYLFFKIFSQ) threads the bilayer. The Lumenal segment spans residues 99 to 100 (EY). The chain crosses the membrane as a helical span at residues 101 to 121 (INLLLSMYFFVLGILALSHTI). The Cytoplasmic portion of the chain corresponds to 122 to 157 (SPFMNKFFPANFPNRQYQLLFTQGSGENKEEIINYE). The helical transmembrane segment at 158–178 (FDTKDLVCLGLSSVVGVWYLL) threads the bilayer. At 179-181 (RKH) the chain is on the lumenal side. The chain crosses the membrane as a helical span at residues 182-202 (WIANNLFGLAFSLNGVELLHL). Over 203 to 209 (NNVSTGC) the chain is Cytoplasmic. A helical membrane pass occupies residues 210-230 (ILLGGLFIYDIFWVFGTNVMV). Residue aspartate 219 is part of the active site. At 231–256 (TVAKSFEAPIKLVFPQDLLEKGLEAD) the chain is on the lumenal side. The chain crosses the membrane as a helical span at residues 257-277 (NFAMLGLGDIVIPGIFIALLL). The active site involves aspartate 265. Over 278-290 (RFDISLKKNTHTY) the chain is Cytoplasmic. Residues 291–311 (FYTSFAAYIFGLGLTIFIMHI) traverse the membrane as a helical segment. Topologically, residues 312 to 314 (FKH) are lumenal. A helical transmembrane segment spans residues 315-335 (AQPALLYLVPACIGFPVLVAL). Positions 317–319 (PAL) match the PAL motif. Over 336–378 (AKGEVAEMFSYEESNPKDPAAETESKEESTEASASKRLEKKEK) the chain is Cytoplasmic. The interval 346 to 378 (YEESNPKDPAAETESKEESTEASASKRLEKKEK) is disordered. The segment covering 349 to 378 (SNPKDPAAETESKEESTEASASKRLEKKEK) has biased composition (basic and acidic residues). Serine 368 carries the phosphoserine modification.

This sequence belongs to the peptidase A22B family. In terms of assembly, monomer. Homodimer. Interacts with RNF139. Interacts with DERL1 and XBP1 isoform 1. In terms of tissue distribution, widely expressed with highest levels in liver and kidney. In the brain, expressed predominantly in hippocampus, amygdala, piriform cortex, choroid plexus and arcuate nucleus of the hypothalamic area. Isoform 1 is more strongly expressed than isoform 4 in most tissues except brain and skeletal muscle where isoform 4 is the dominant isoform and in testis where isoform 1 and isoform 4 are expressed at similar levels. In the brain, isoform 4 is not detected in the choroid plexus.

It is found in the endoplasmic reticulum membrane. It localises to the membrane. Its subcellular location is the cell membrane. In terms of biological role, catalyzes intramembrane proteolysis of signal peptides that have been removed from precursors of secretory and membrane proteins, resulting in the release of the fragment from the ER membrane into the cytoplasm. Required to generate lymphocyte cell surface (HLA-E) epitopes derived from MHC class I signal peptides. Involved in the intramembrane cleavage of the integral membrane protein PSEN1. Cleaves the integral membrane protein XBP1 isoform 1 in a DERL1/RNF139-dependent manner. May play a role in graft rejection. The protein is Signal peptide peptidase of Mus musculus (Mouse).